Reading from the N-terminus, the 46-residue chain is Homeobox protein Hox-D4 (46 aa).

The homeobox DNA-binding region spans 1–46 (VNSNYTGGEPKRSRTAYTRQQVLELEKEFLFNRYLTRRRRIQHTLT).

Belongs to the Antp homeobox family. Deformed subfamily. As to quaternary structure, forms a DNA-binding heterodimer with transcription factor PBX1.

The protein resides in the nucleus. Sequence-specific transcription factor which is part of a developmental regulatory system that provides cells with specific positional identities on the anterior-posterior axis. This Ovis aries (Sheep) protein is Homeobox protein Hox-D4 (HOXD4).